The primary structure comprises 352 residues: NAD(P)H pyrophosphatase NUDT13, mitochondrial (352 aa).

A mitochondrion-targeting transit peptide spans 1–20; that stretch reads MSLYCRTFFRRKSFGCYRLL. One can recognise a Nudix hydrolase domain in the interval 196-323; it reads PQMAPVVITL…SLALQPSEAS (128 aa). The Nudix box signature appears at 216 to 240; sequence RQSSFPKGLYSALAGFCDIGESVEE.

Belongs to the Nudix hydrolase family. It depends on Mg(2+) as a cofactor. Mn(2+) is required as a cofactor.

It localises to the mitochondrion. It carries out the reaction NADH + H2O = reduced beta-nicotinamide D-ribonucleotide + AMP + 2 H(+). It catalyses the reaction NAD(+) + H2O = beta-nicotinamide D-ribonucleotide + AMP + 2 H(+). The enzyme catalyses NADPH + H2O = reduced beta-nicotinamide D-ribonucleotide + adenosine 2',5'-bisphosphate + 2 H(+). Its function is as follows. NAD(P)H pyrophosphatase that hydrolyzes NADH into NMNH and AMP, and NADPH into NMNH and 2',5'-ADP. Has a marked preference for the reduced pyridine nucleotides. Does not show activity toward NAD-capped RNAs; the NAD-cap is an atypical cap present at the 5'-end of some RNAs. This Mus musculus (Mouse) protein is NAD(P)H pyrophosphatase NUDT13, mitochondrial.